The sequence spans 155 residues: Small ribosomal subunit protein uS7c (155 aa).

Belongs to the universal ribosomal protein uS7 family. As to quaternary structure, part of the 30S ribosomal subunit.

The protein resides in the plastid. In terms of biological role, one of the primary rRNA binding proteins, it binds directly to 16S rRNA where it nucleates assembly of the head domain of the 30S subunit. The sequence is that of Small ribosomal subunit protein uS7c (rps7) from Lathraea clandestina (Purple toothwort).